The chain runs to 693 residues: Testis-specific Y-encoded-like protein 2 (693 aa).

2 disordered regions span residues 1 to 56 and 104 to 125; these read MDRP…EAAQ and GYGE…EASG. Lysine 11 is covalently cross-linked (Glycyl lysine isopeptide (Lys-Gly) (interchain with G-Cter in SUMO2)). Serine 18 and serine 20 each carry phosphoserine. Residues 23–44 show a composition bias toward pro residues; it reads RDPPPPPPPPPLLRLPLPPPQQ. Residues lysine 163 and lysine 165 each participate in a glycyl lysine isopeptide (Lys-Gly) (interchain with G-Cter in SUMO2) cross-link. Residues 175-207 form a disordered region; the sequence is EDEDERESMRSSRRRRRRRRRKQRKVKRESRER. The segment covering 185–202 has biased composition (basic residues); that stretch reads SSRRRRRRRRRKQRKVKR. A Phosphothreonine modification is found at threonine 340. 2 disordered regions span residues 474 to 605 and 627 to 693; these read ENIC…DIEY and ISDE…GKTG. Residues 487-496 show a composition bias toward polar residues; it reads VPNNETTDNN. The span at 509 to 519 shows a compositional bias: acidic residues; the sequence is ESADDNNENPE. The segment covering 531–542 has biased composition (low complexity); sequence NPNNNENTYGNN. Acidic residues-rich tracts occupy residues 559 to 602 and 627 to 675; these read SDSD…DDRD and ISDE…DLED. 3 positions are modified to phosphoserine: serine 658, serine 668, and serine 671.

This sequence belongs to the nucleosome assembly protein (NAP) family. In terms of assembly, interacts with histones. Interacts with CASK. Part of a complex containing CASK, TBR1 and TSPYL2. In terms of processing, phosphorylation at Ser-20 and/or Thr-340 impairs function on cell proliferation. In terms of tissue distribution, ubiquitously expressed, with highest levels in brain, testis and heart, and lowest levels in liver and pancreas.

The protein localises to the nucleus. Its subcellular location is the cytoplasm. Its function is as follows. Part of the CASK/TBR1/TSPYL2 transcriptional complex which modulates gene expression in response to neuronal synaptic activity, probably by facilitating nucleosome assembly. May inhibit cell proliferation by inducing p53-dependent CDKN1A expression. The polypeptide is Testis-specific Y-encoded-like protein 2 (TSPYL2) (Homo sapiens (Human)).